Reading from the N-terminus, the 215-residue chain is Cytidylate kinase (215 aa).

Position 10–18 (10–18 (GPAASGKGT)) interacts with ATP.

This sequence belongs to the cytidylate kinase family. Type 1 subfamily.

The protein localises to the cytoplasm. The catalysed reaction is CMP + ATP = CDP + ADP. It catalyses the reaction dCMP + ATP = dCDP + ADP. This is Cytidylate kinase from Bartonella tribocorum (strain CIP 105476 / IBS 506).